The following is a 537-amino-acid chain: uncharacterized protein (537 aa).

The tract at residues 10 to 56 is disordered; it reads HHDVEPQNVEEEPPLTGQTIVTEDKLETSAKDKKHESPSMSEDEEGS. Residues 31–46 show a composition bias toward basic and acidic residues; it reads TEDKLETSAKDKKHES. Helical transmembrane passes span 90–110, 133–153, 156–176, 180–200, 213–233, 243–263, 313–333, 348–368, 393–413, 422–442, 457–477, and 492–512; these read FVAT…TACI, LFIV…DIFG, WVYV…ALAY, MMAI…ANVA, GFGI…GSPI, WFYW…VLCP, PIIM…FLYL, YMGA…VVML, FLIS…FAFT, SPLI…LAMI, IAAF…LGII, and AFIS…GHLI.

Belongs to the major facilitator superfamily. CAR1 family.

The protein localises to the endoplasmic reticulum. The protein resides in the golgi apparatus. It is found in the membrane. This is an uncharacterized protein from Schizosaccharomyces pombe (strain 972 / ATCC 24843) (Fission yeast).